The chain runs to 103 residues: Serine rich endogenous peptide 9 (103 aa).

A signal peptide spans 1-25 (MENIFFSKLTQVFIVALLCIFIYRT). A disordered region spans residues 54–103 (IYVKPPPLKSKDSNQKGKRGETYYKPNSEIGTGPSHSGHGGSSIEHVSSP). Basic and acidic residues predominate over residues 62-75 (KSKDSNQKGKRGET). The short motif at 82–96 (EIGTGPSHSGHGGSS) is the SCOOP motif element. Residues 84–103 (GTGPSHSGHGGSSIEHVSSP) are compositionally biased toward low complexity. Residues 88–90 (SHS) carry the SxS motif essential for MIK2 binding motif.

It belongs to the serine rich endogenous peptide (SCOOP) phytocytokine family. As to quaternary structure, interacts with MIK2 (via extracellular leucine-rich repeat domain); this interaction triggers the formation of complex between MIK2 and the BAK1/SERK3 and SERK4 coreceptors, and subsequent BAK1 activation by phosphorylation. Mostly expressed in seedlings shoots and roots, and, to a lower extent, in leaves, but barely in flowers.

The protein resides in the cell membrane. Its subcellular location is the secreted. The protein localises to the extracellular space. It localises to the apoplast. Functionally, brassicaceae-specific phytocytokine (plant endogenous peptide released into the apoplast) perceived by MIK2 in a BAK1/SERK3 and SERK4 coreceptors-dependent manner, that modulates various physiological and antimicrobial processes including growth prevention and reactive oxygen species (ROS) response regulation. This chain is Serine rich endogenous peptide 9, found in Arabidopsis thaliana (Mouse-ear cress).